Here is a 166-residue protein sequence, read N- to C-terminus: ATP synthase subunit b (166 aa).

The helical transmembrane segment at 15-37 (TLYYLLIFAALLLLVKHFAWGPV) threads the bilayer.

The protein belongs to the ATPase B chain family. F-type ATPases have 2 components, F(1) - the catalytic core - and F(0) - the membrane proton channel. F(1) has five subunits: alpha(3), beta(3), gamma(1), delta(1), epsilon(1). F(0) has three main subunits: a(1), b(2) and c(10-14). The alpha and beta chains form an alternating ring which encloses part of the gamma chain. F(1) is attached to F(0) by a central stalk formed by the gamma and epsilon chains, while a peripheral stalk is formed by the delta and b chains.

It is found in the cell membrane. In terms of biological role, f(1)F(0) ATP synthase produces ATP from ADP in the presence of a proton or sodium gradient. F-type ATPases consist of two structural domains, F(1) containing the extramembraneous catalytic core and F(0) containing the membrane proton channel, linked together by a central stalk and a peripheral stalk. During catalysis, ATP synthesis in the catalytic domain of F(1) is coupled via a rotary mechanism of the central stalk subunits to proton translocation. Functionally, component of the F(0) channel, it forms part of the peripheral stalk, linking F(1) to F(0). In Lactobacillus johnsonii (strain CNCM I-12250 / La1 / NCC 533), this protein is ATP synthase subunit b.